The chain runs to 251 residues: Triosephosphate isomerase (251 aa).

A substrate-binding site is contributed by 9–11; sequence NWK. Catalysis depends on His95, which acts as the Electrophile. Glu167 functions as the Proton acceptor in the catalytic mechanism. Residues Gly173, Ser213, and 234–235 each bind substrate; that span reads GG.

The protein belongs to the triosephosphate isomerase family. As to quaternary structure, homodimer.

The protein resides in the cytoplasm. It carries out the reaction D-glyceraldehyde 3-phosphate = dihydroxyacetone phosphate. Its pathway is carbohydrate biosynthesis; gluconeogenesis. The protein operates within carbohydrate degradation; glycolysis; D-glyceraldehyde 3-phosphate from glycerone phosphate: step 1/1. In terms of biological role, involved in the gluconeogenesis. Catalyzes stereospecifically the conversion of dihydroxyacetone phosphate (DHAP) to D-glyceraldehyde-3-phosphate (G3P). This chain is Triosephosphate isomerase, found in Lactobacillus gasseri (strain ATCC 33323 / DSM 20243 / BCRC 14619 / CIP 102991 / JCM 1131 / KCTC 3163 / NCIMB 11718 / NCTC 13722 / AM63).